Consider the following 33-residue polypeptide: Mu-theraphotoxin-Ssp1a (33 aa).

3 disulfides stabilise this stretch: Cys2–Cys17, Cys9–Cys22, and Cys16–Cys29. The residue at position 33 (Leu33) is a Leucine amide.

It belongs to the neurotoxin 10 (Hwtx-1) family. 22 (Htx-4) subfamily. Expressed by the venom gland.

It localises to the secreted. Its function is as follows. Gating modifier toxin that traps voltage-sensing domain II of voltage-gated sodium channels in the resting state without significantly altering the voltage-dependence of activation and inactivation, or delay in recovery from inactivation. Inhibits hNav1.7/SCN9A (IC(50)=134 nM), followed in rank order of potency by Nav1.6/SCN8A (IC(50)=191 nM), Nav1.2/SCN2A (IC(50)=239 nM), Nav1.3/SCN3A (IC(50)=547 nM) and Nav1.1/SCN1A (IC(50)=674 nM). Its binding to Nav1.2, Nav1.3 and Nav1.7 is slowly reversible and incomplete, with ~25% of Nav1.2, ~50% of Nav1.3 and ~40% of Nav1.7 channels recovering from block after a 30 minutes washout, respectively. Binds in the aqueous cleft formed between the S1-S2 and S3-S4 loops of each channel subtype, primarily targeting the S3-S4 loop. The chain is Mu-theraphotoxin-Ssp1a from Selenotypus sp. (Feather-legged tarantula).